We begin with the raw amino-acid sequence, 1987 residues long: MQSFREQSSYHGNQQSYPQEVHSSSRIEEFSPRQAQMFQNFGGAGGGSSGTGSSSSGRRGTAAAAAAMASETSGHQGYQGFRKEAGDFYYMAGNKDTVAAGTPQPPQRRPSGPVQSYGPPQGSSFGNQYASEGHVSQFQAQHSALGGVSHYQQDYTGPFSPGSAQYQQQASSQQQQQQQQQQQQQQQQQQQQVQQLRQQLYQSHQPLPQTTGQPASGSSHLQPMQRPSTLPSSAGYQLRVGQFGQHYQSSASSSSSSSFPSPQRFSQSGQSYDGSYSVNAGSQYEGHNVGSNAQAYGTQSNYSYQPQSMKNFEQAKIPPGNQQGQQQQQQQPQPQQQQPQQQQQQQQQQQHPPQHVMQYTNAATKMPLQSQVGQYNQPEVPVRSPMQFHQNFSPISNPSPAASVVQSPSCSSTPSPLMQSGENLQCGQGNVPMSSRNRILQLMPQLSPTPSMMPSPNSHAAGFKGFGLEGVPEKRLTDPGLSSLSALSSQVANLPNTVQHMLLSDALTPQKKTSKRPSSSSKKADSCTNSEGSSQPEEQLKSPMAESLDGGCSSSSEDQGERVRQLSGQSTSSDTTYKCGASEKAGSSPTQGAQNEAPRLSTSPATRDEAASPGAKDTSLSSEGNTKVNEKTVGVIVSREAMTGRVEKSGGQDKGSQEDDPAASQRPPSNSGVKEISHTSLPQPDPPGGGSKGNKNGDNNSSNHNGEGNGPSSHSAVGPSFTGRTEPSKSPGSLRYSYKESFGSAVPRNVSGYPQYPSGQEKGDFGSHGERKGRNEKFPSLLQEVLQGYHHHPDRRYPRSAQEHQGMASGLEGTARPNILVSQTNELASRGLLNKSIGSLLENPHWGPWERKSSSTAPEMKQINLSDYPIPRKFEIEPPSSAHEPGGSLSERRSVICDISPLRQIVRDPGAHSLGHMGTDARIGRNERLNPSLSQSVILPGGLVSMETKLKSQSGQIKEEDFEQSKSQASFNKKSGDHCHPTSIKHETYRGNASPGAAAHDSISDYGPQDSRSTPMRRVPGRVGSRETMRGRSSSQYHDFAEKLKMSPGRSRGPGGDPHHMNPHMTFSERANRSSLHAPFSPNSESLASAYHTNTRAHAYGDPNTGLNSQLHYKRQMYQQQQEEYKDWASSSAQGVIAAAQHRQEGPRKSPRQQQFLDRVRSPLKNDKDGMMYGPPVGTYHDPSTQEAGRCLMSSDGLPAKSMELKHSSQKLQESCWDLSRQTSPAKSSGPPGMSNQKRYGPPHEPDGHGLAESAQSSKPSNVMLRLPGQEDHSSQNPLIMRRRVRSFISPIPSKRQSQDVKNSNADDKGRLLHPSKEGADKAYNSYSHLSHSQDIKSIPKRDSSKDLPNPDNRNCPAVTLTSPAKTKILPPRKGRGLKLEAIVQKITSPNIRRSASANSAEAGGDTVTLDDILSLKSGPPEGGTVATQEAEMEKRKCEVVSDLVSVTNQESNVEKPLPGPSEEWRGSGDDKVKTEAHVETASTGKEPSGTMTSTASQKPGGNQGRPDGSLGGAAPLIFPDSKNVAPVGILAPEANPKAEEKENDTVMISPKQESFPPKGYFPSGKKKGRPIGSVNKQKKQQQQPPPPPQPPQMPEGSADGEPKPKKQRQRRERRKPGAQPRKRKTKQAVPIVEPQEPEIKLKYATQPLDKTDAKNKSFFPYIHVVNKCELGAVCTIINAEEEEQTKLVRSRKGQRSLTPPPSSTESKVLPASSFMLQGPVVTESSVMGHLVCCLCGKWASYRNMGDLFGPFYPQDYAATLPKNPPPKRSSEMQSKVKVRHKSASNGSKTDTEEEEEQQQQKEQRSLAAHPRFKRRHRSEDCGGGPRSLSRGLPCKKAATEGSSEKTVSDTKPSVPTTSEGGPELELQIPELPLDSNEFWVHEGCILWANGIYLVCGRLYGLQEALEIAREMKCSHCQEAGATLGCYNKGCSFRYHYPCAIDADCLLHEENFSVRCPKHKPPLPCPLPPLQNKTAKGSLSTEQSERG.

Positions 1–22 (MQSFREQSSYHGNQQSYPQEVH) are enriched in polar residues. 5 disordered regions span residues 1–79 (MQSF…QGYQ), 96–432 (DTVA…GNVP), 446–481 (LSPT…DPGL), 502–816 (LLSD…GTAR), and 844–891 (PHWG…SLSE). Residues 51 to 74 (TGSSSSGRRGTAAAAAAMASETSG) show a composition bias toward low complexity. Arginine 59 is subject to Omega-N-methylarginine. Polar residues predominate over residues 121 to 142 (QGSSFGNQYASEGHVSQFQAQH). The span at 163–205 (SAQYQQQASSQQQQQQQQQQQQQQQQQQQQVQQLRQQLYQSHQ) shows a compositional bias: low complexity. A compositionally biased stretch (polar residues) spans 206–235 (PLPQTTGQPASGSSHLQPMQRPSTLPSSAG). Residues 248–277 (QSSASSSSSSSFPSPQRFSQSGQSYDGSYS) are compositionally biased toward low complexity. A compositionally biased stretch (polar residues) spans 289–311 (VGSNAQAYGTQSNYSYQPQSMKN). Lysine 316 participates in a covalent cross-link: Glycyl lysine isopeptide (Lys-Gly) (interchain with G-Cter in SUMO2). Residues 322 to 354 (QQGQQQQQQQPQPQQQQPQQQQQQQQQQQHPPQ) are compositionally biased toward low complexity. Polar residues predominate over residues 357–377 (MQYTNAATKMPLQSQVGQYNQ). The span at 396–416 (SNPSPAASVVQSPSCSSTPSP) shows a compositional bias: low complexity. The span at 417–432 (LMQSGENLQCGQGNVP) shows a compositional bias: polar residues. Low complexity predominate over residues 446–456 (LSPTPSMMPSP). 2 positions are modified to phosphoserine: serine 447 and serine 458. Polar residues-rich tracts occupy residues 526–537 (SCTNSEGSSQPE), 566–576 (LSGQSTSSDTT), and 585–605 (AGSS…TSPA). Residues serine 567, serine 588, serine 603, and serine 612 each carry the phosphoserine modification. A compositionally biased stretch (polar residues) spans 618–627 (TSLSSEGNTK). Position 631 is an N6-acetyllysine (lysine 631). Basic and acidic residues predominate over residues 645 to 657 (RVEKSGGQDKGSQ). The span at 666 to 682 (RPPSNSGVKEISHTSLP) shows a compositional bias: polar residues. Serine 669 is subject to Phosphoserine. A compositionally biased stretch (low complexity) spans 693-715 (GNKNGDNNSSNHNGEGNGPSSHS). Residues 722-731 (TGRTEPSKSP) show a composition bias toward polar residues. Residues lysine 739, lysine 762, lysine 777, lysine 852, lysine 861, and lysine 873 each participate in a glycyl lysine isopeptide (Lys-Gly) (interchain with G-Cter in SUMO2) cross-link. Positions 761–777 (EKGDFGSHGERKGRNEK) are enriched in basic and acidic residues. The residue at position 900 (serine 900) is a Phosphoserine. Glycyl lysine isopeptide (Lys-Gly) (interchain with G-Cter in SUMO2) cross-links involve residues lysine 949 and lysine 951. Positions 949–1065 (KLKSQSGQIK…GDPHHMNPHM (117 aa)) are disordered. Lysine 958 participates in a covalent cross-link: Glycyl lysine isopeptide (Lys-Gly) (interchain with G-Cter in SUMO1); alternate. Residue lysine 958 forms a Glycyl lysine isopeptide (Lys-Gly) (interchain with G-Cter in SUMO2); alternate linkage. Residues 974 to 989 (KSGDHCHPTSIKHETY) show a composition bias toward basic and acidic residues. Residue lysine 985 forms a Glycyl lysine isopeptide (Lys-Gly) (interchain with G-Cter in SUMO2) linkage. 2 positions are modified to phosphoserine: serine 994 and serine 1033. Lysine 1043 participates in a covalent cross-link: Glycyl lysine isopeptide (Lys-Gly) (interchain with G-Cter in SUMO2). Arginine 1052 carries the post-translational modification Omega-N-methylarginine. Serine 1081 is subject to Phosphoserine. Glycyl lysine isopeptide (Lys-Gly) (interchain with G-Cter in SUMO2) cross-links involve residues lysine 1114, lysine 1126, lysine 1165, lysine 1201, lysine 1206, lysine 1211, lysine 1238, lysine 1259, lysine 1295, and lysine 1302. Positions 1136–1372 (VIAAAQHRQE…SPAKTKILPP (237 aa)) are disordered. Residues 1158-1170 (DRVRSPLKNDKDG) are compositionally biased toward basic and acidic residues. Residues 1198 to 1219 (LPAKSMELKHSSQKLQESCWDL) form a leucine-zipper region. Residues 1282–1295 (RRRVRSFISPIPSK) carry the Nuclear localization signal motif. Composition is skewed to basic and acidic residues over residues 1305–1321 (NADD…EGAD) and 1332–1346 (HSQD…DSSK). The residue at position 1333 (serine 1333) is a Phosphoserine. Lysine 1337 is covalently cross-linked (Glycyl lysine isopeptide (Lys-Gly) (interchain with G-Cter in SUMO2)). Position 1363 is a phosphoserine (serine 1363). A Glycyl lysine isopeptide (Lys-Gly) (interchain with G-Cter in SUMO2) cross-link involves residue lysine 1366. At serine 1389 the chain carries Phosphoserine. Residues 1415–1434 (SLKSGPPEGGTVATQEAEME) are disordered. Glycyl lysine isopeptide (Lys-Gly) (interchain with G-Cter in SUMO2) cross-links involve residues lysine 1417, lysine 1437, lysine 1456, and lysine 1474. Positions 1446–1636 (SVTNQESNVE…KQAVPIVEPQ (191 aa)) are disordered. The span at 1463–1479 (EEWRGSGDDKVKTEAHV) shows a compositional bias: basic and acidic residues. Residues 1481 to 1501 (TASTGKEPSGTMTSTASQKPG) show a composition bias toward polar residues. Lysine 1538 participates in a covalent cross-link: Glycyl lysine isopeptide (Lys-Gly) (interchain with G-Cter in SUMO2). Serine 1550 is subject to Phosphoserine. Lysine 1552 is covalently cross-linked (Glycyl lysine isopeptide (Lys-Gly) (interchain with G-Cter in SUMO2)). Residues 1565–1579 (GKKKGRPIGSVNKQK) constitute a DNA-binding region (a.T hook). Positions 1584–1594 (QPPPPPQPPQM) are enriched in pro residues. The Nuclear localization signal signature appears at 1604 to 1628 (KPKKQRQRRERRKPGAQPRKRKTKQ). Residues 1606–1627 (KKQRQRRERRKPGAQPRKRKTK) are compositionally biased toward basic residues. Lysine 1641 participates in a covalent cross-link: Glycyl lysine isopeptide (Lys-Gly) (interchain with G-Cter in SUMO2). Disordered stretches follow at residues 1685-1710 (QTKL…SKVL) and 1760-1865 (TLPK…GPEL). Serine 1697 carries the post-translational modification Phosphoserine. Phosphothreonine occurs at positions 1699, 1790, and 1792. The short motif at 1812 to 1819 (RFKRRHRS) is the Nuclear localization signal element. Residues 1850–1859 (DTKPSVPTTS) are compositionally biased toward polar residues. A C2HC pre-PHD-type; degenerate zinc finger spans residues 1856-1892 (PTTSEGGPELELQIPELPLDSNEFWVHEGCILWANGI). The segment at 1912-1960 (MKCSHCQEAGATLGCYNKGCSFRYHYPCAIDADCLLHEENFSVRCPKHK) adopts a PHD-type zinc-finger fold. Residues 1966–1987 (PLPPLQNKTAKGSLSTEQSERG) are disordered. Residues 1971 to 1987 (QNKTAKGSLSTEQSERG) are compositionally biased toward polar residues.

As to quaternary structure, homodimer. Interacts with RNF4 and JUN. Binds to the regulatory region of MMP3. As to expression, expressed in brain, lung, liver, kidney and testes.

The protein localises to the nucleus. Transcriptional activator that binds to the regulatory region of MMP3 and thereby controls stromelysin expression. It stimulates the activity of various transcriptional activators such as JUN, SP1, PAX6 and ETS1, suggesting a function as a coactivator. The sequence is that of Transcription factor 20 (Tcf20) from Mus musculus (Mouse).